Consider the following 583-residue polypeptide: 2-succinyl-5-enolpyruvyl-6-hydroxy-3-cyclohexene-1-carboxylate synthase (583 aa).

Belongs to the TPP enzyme family. MenD subfamily. In terms of assembly, homodimer. It depends on Mg(2+) as a cofactor. The cofactor is Mn(2+). Thiamine diphosphate serves as cofactor.

It catalyses the reaction isochorismate + 2-oxoglutarate + H(+) = 5-enolpyruvoyl-6-hydroxy-2-succinyl-cyclohex-3-ene-1-carboxylate + CO2. It functions in the pathway quinol/quinone metabolism; 1,4-dihydroxy-2-naphthoate biosynthesis; 1,4-dihydroxy-2-naphthoate from chorismate: step 2/7. Its pathway is quinol/quinone metabolism; menaquinone biosynthesis. Catalyzes the thiamine diphosphate-dependent decarboxylation of 2-oxoglutarate and the subsequent addition of the resulting succinic semialdehyde-thiamine pyrophosphate anion to isochorismate to yield 2-succinyl-5-enolpyruvyl-6-hydroxy-3-cyclohexene-1-carboxylate (SEPHCHC). The polypeptide is 2-succinyl-5-enolpyruvyl-6-hydroxy-3-cyclohexene-1-carboxylate synthase (Chlorobium luteolum (strain DSM 273 / BCRC 81028 / 2530) (Pelodictyon luteolum)).